Consider the following 2311-residue polypeptide: Proto-oncogene tyrosine-protein kinase ROS (2311 aa).

Residues 1 to 24 (MRNACLLLNRLGAFYFIWISAAYC) form the signal peptide. The Extracellular segment spans residues 25–1873 (SFSKNCQDLC…LAKDTVTSPD (1849 aa)). N-linked (GlcNAc...) asparagine glycosylation is found at Asn-49, Asn-65, Asn-77, Asn-123, Asn-132, Asn-265, Asn-287, Asn-307, Asn-333, Asn-377, Asn-405, Asn-480, Asn-607, Asn-628, Asn-706, Asn-714, Asn-911, Asn-940, Asn-962, Asn-971, Asn-1110, Asn-1154, Asn-1180, Asn-1233, Asn-1255, Asn-1282, Asn-1316, Asn-1470, Asn-1509, Asn-1588, Asn-1628, Asn-1682, Asn-1696, and Asn-1730. Fibronectin type-III domains lie at 110–202 (KPGA…ASGV) and 203–294 (PTTA…PESK). The region spanning 571–671 (LPTLPRLVTV…EPFRGMTFEE (101 aa)) is the Fibronectin type-III 3 domain. Fibronectin type-III domains follow at residues 952-1047 (VPES…APEG) and 1051-1158 (APAN…SSDI). 4 Fibronectin type-III domains span residues 1459-1569 (DTEK…TLYG), 1570-1669 (VPEG…AKTF), 1671-1766 (TPLS…TTAG), and 1767-1868 (VPSK…AKDT). Positions 1754–1764 (STSSPTSFKTT) are enriched in low complexity. The tract at residues 1754–1786 (STSSPTSFKTTAGVPSKPGTPKRAEDSKNSVQW) is disordered. Over residues 1775-1786 (KRAEDSKNSVQW) the composition is skewed to basic and acidic residues. N-linked (GlcNAc...) asparagine glycans are attached at residues Asn-1792, Asn-1795, and Asn-1822. Residues 1874–1898 (ITAIVAVIGAVVLGLTIIILFGFVW) form a helical membrane-spanning segment. Residues 1899–2311 (HQRWKSRKPA…SISSAELTSV (413 aa)) are Cytoplasmic-facing. Residues 1961 to 2240 (LNLHKLLGSG…KLQEIRHSPL (280 aa)) form the Protein kinase domain. ATP contacts are provided by residues 1967–1975 (LGSGAFGEV) and Lys-1996. Asp-2095 functions as the Proton acceptor in the catalytic mechanism. At Tyr-2131 the chain carries Phosphotyrosine; by autocatalysis.

Belongs to the protein kinase superfamily. Tyr protein kinase family. Insulin receptor subfamily. As to quaternary structure, interacts with VAV3; constitutive interaction mediating VAV3 phosphorylation. As to expression, highest expression in kidney. Also expressed in gonad, thymus, bursa, brain and kidney.

It localises to the cell membrane. It catalyses the reaction L-tyrosyl-[protein] + ATP = O-phospho-L-tyrosyl-[protein] + ADP + H(+). Functionally, orphan receptor tyrosine kinase (RTK) that may activate several downstream signaling pathways related to cell differentiation, proliferation, growth and survival including the PI3 kinase-mTOR signaling pathway. Mediates the phosphorylation of PTPN11, an activator of this pathway. May also phosphorylate and activate the transcription factor STAT3 to control anchorage-independent cell growth. Mediates the phosphorylation and the activation of VAV3, a guanine nucleotide exchange factor regulating cell morphology. May activate other downstream signaling proteins including AKT1, MAPK1, MAPK3, IRS1, and PLCG2. The chain is Proto-oncogene tyrosine-protein kinase ROS (ROS1) from Gallus gallus (Chicken).